A 147-amino-acid polypeptide reads, in one-letter code: UPF0306 protein YhbP (147 aa).

This sequence belongs to the UPF0306 family.

The protein is UPF0306 protein YhbP of Escherichia coli O17:K52:H18 (strain UMN026 / ExPEC).